The sequence spans 228 residues: Small ribosomal subunit protein uS3 (228 aa).

Residues 39-107 (TREYLQDKLK…PVHINIEEIR (69 aa)) enclose the KH type-2 domain.

It belongs to the universal ribosomal protein uS3 family. In terms of assembly, part of the 30S ribosomal subunit. Forms a tight complex with proteins S10 and S14.

Functionally, binds the lower part of the 30S subunit head. Binds mRNA in the 70S ribosome, positioning it for translation. The protein is Small ribosomal subunit protein uS3 of Pseudomonas entomophila (strain L48).